The chain runs to 155 residues: Protein U1 (155 aa).

Belongs to the nanovirus U1 protein family.

This Cicer arietinum (Chickpea) protein is Protein U1 (DNA-U1).